Consider the following 102-residue polypeptide: uncharacterized protein (102 aa).

Positions 77–102 (RKDGDEKSKPNSKDYASRPIRDHSKI) are disordered.

This is an uncharacterized protein from Microplitis demolitor (Parasitoid wasp).